A 314-amino-acid polypeptide reads, in one-letter code: Carbamate kinase (314 aa).

The protein belongs to the carbamate kinase family. As to quaternary structure, homodimer.

It localises to the cytoplasm. The enzyme catalyses hydrogencarbonate + NH4(+) + ATP = carbamoyl phosphate + ADP + H2O + H(+). The sequence is that of Carbamate kinase (cpkA) from Pyrococcus horikoshii (strain ATCC 700860 / DSM 12428 / JCM 9974 / NBRC 100139 / OT-3).